We begin with the raw amino-acid sequence, 105 residues long: Protein METHYLENE BLUE SENSITIVITY 1 (105 aa).

Residues 26 to 46 (RGGGKAGIADRTGKEKGGHAK) form a disordered region. Residues 36–46 (RTGKEKGGHAK) are compositionally biased toward basic and acidic residues.

In terms of tissue distribution, mainly expressed in the epidermis.

It localises to the nucleus. It is found in the cytoplasm. The protein localises to the stress granule. Functionally, required for acclimation to reactive oxygen species (ROS) responses downstream of beta-cyclocitral (beta-cc) or mediated by dihydroactinidiolide, including singlet oxygen 1O(2) detoxification reactions, especially upon light-mediated photooxidative stress, and leading to programmed cell death. Prevents leaf senescence. Involved in cold acclimation. The polypeptide is Protein METHYLENE BLUE SENSITIVITY 1 (Arabidopsis thaliana (Mouse-ear cress)).